Consider the following 221-residue polypeptide: NEDD4 family-interacting protein 1 (221 aa).

Ala2 bears the N-acetylalanine mark. Residues 2-41 (ALALAALAAVEPACGTGYQQLQNEEEPGEREQTAGDAPPP) are interaction with UBE2L3. At 2–116 (ALALAALAAV…ADQLRIGNDG (115 aa)) the chain is on the cytoplasmic side. Positions 15-45 (CGTGYQQLQNEEEPGEREQTAGDAPPPYSSI) are disordered. 3 consecutive short sequence motifs (PPxY motif) follow at residues 39–42 (PPPY), 64–67 (PPSY), and 74–76 (PSY). The interval 42-76 (YSSISAESAAYFDYKDESGFPKPPSYNVATTLPSY) is interaction with ITCH. The helical transmembrane segment at 117 to 137 (IFMLTFFMAFLFNWIGFFLSF) threads the bilayer. The Extracellular portion of the chain corresponds to 138–143 (CLTTSA). Residues 144-164 (AGRYGAISGFGLSLIKWILIV) traverse the membrane as a helical segment. The Cytoplasmic portion of the chain corresponds to 165 to 172 (RFSTYFPG). The helical transmembrane segment at 173-193 (YFDGQYWLWWVFLVLGFLLFL) threads the bilayer. Over 194 to 221 (RGFINYAKVRKMPETFSNLPRTRVLFIY) the chain is Extracellular.

Forms heterodimers with NDFIP2. Interacts with several E3 ubiquitin-protein ligases, including ITCH, NEDD4, NEDD4L and WWP2. The interaction with NEDD4, NEDD4L and ITCH leads to relocalization of these proteins to exosomes and eventually to exosomal secretion. Interacts with SR1402. Interacts with SLC11A2/DMT1. Interacts with PTEN. May interact with phosphorylated EGFR. Interacts with BRAT1. Interacts with KCNH2. Interacts with MAVS. Part of a complex containing ITCH, NDFIP1 and MAP3K7. Interacts (via N-terminus) with UBE2L3; the interaction mediates recruitment of UBE2L3 to ITCH. Post-translationally, ubiquitinated by NEDD4; mono-, di- and polyubiquitinated forms are detected. Ubiquitination regulates its degradation. In terms of processing, undergoes transient tyrosine phosphorylation following EGF stimulation, most probably by catalyzed by SRC. Phosphorylation SRC is enhanced in the presence of NDFIP2 which may act as a scaffold to recruit SRC to NDFIP1.

The protein resides in the endosome membrane. It localises to the golgi apparatus membrane. It is found in the synapse. Its subcellular location is the synaptosome. The protein localises to the cell projection. The protein resides in the dendrite. It localises to the secreted. Its function is as follows. Activates HECT domain-containing E3 ubiquitin-protein ligases, including NEDD4 and ITCH, and consequently modulates the stability of their targets. As a result, controls many cellular processes. Prevents chronic T-helper cell-mediated inflammation by activating ITCH and thus controlling JUNB degradation. Promotes pancreatic beta cell death through degradation of JUNB and inhibition of the unfolded protein response, leading to reduction of insulin secretion. Restricts the production of pro-inflammatory cytokines in effector Th17 T-cells by promoting ITCH-mediated ubiquitination degradation of RORC. Together with NDFIP2, limits the cytokine signaling and expansion of effector Th2 T-cells by promoting degradation of JAK1, probably by ITCH- and NEDD4L-mediated ubiquitination. Regulates peripheral T-cell tolerance to self and foreign antigens, forcing the exit of naive CD4+ T-cells from the cell cycle before they become effector T-cells. Negatively regulates RLR-mediated antiviral response by promoting SMURF1-mediated ubiquitination and subsequent degradation of MAVS. Negatively regulates KCNH2 potassium channel activity by decreasing its cell-surface expression and interfering with channel maturation through recruitment of NEDD4L to the Golgi apparatus where it mediates KCNH2 degradation. In cortical neurons, mediates the ubiquitination of the divalent metal transporter SLC11A2/DMT1 by NEDD4L, leading to its down-regulation and protection of the cells from cobalt and iron toxicity. Important for normal development of dendrites and dendritic spines in cortex. Enhances the ubiquitination of BRAT1 mediated by: NEDD4, NEDD4L and ITCH and is required for the nuclear localization of ubiquitinated BRAT1. Enhances the ITCH-mediated ubiquitination of MAP3K7 by recruiting E2 ubiquitin-conjugating enzyme UBE2L3 to ITCH. Modulates EGFR signaling through multiple pathways. In particular, may regulate the ratio of AKT1-to-MAPK8 signaling in response to EGF, acting on AKT1 probably through PTEN destabilization and on MAPK8 through ITCH-dependent MAP2K4 inactivation. As a result, may control cell growth rate. Inhibits cell proliferation by promoting PTEN nuclear localization and changing its signaling specificity. The chain is NEDD4 family-interacting protein 1 (Ndfip1) from Rattus norvegicus (Rat).